The sequence spans 858 residues: Elongation factor 2 (858 aa).

Residues 17-362 (ANIRNMSVIA…MITIHLPSPV (346 aa)) enclose the tr-type G domain. Residue 26–33 (AHVDHGKS) coordinates GTP. The residue at position 54 (Thr54) is a Phosphothreonine. Residue Thr57 is modified to Phosphothreonine; by EEF2K. Thr59 is subject to Phosphothreonine. Lys152 bears the N6-succinyllysine mark. GTP-binding positions include 158 to 161 (NKMD) and 216 to 218 (SGL). N6-acetyllysine is present on Lys235. Residue Lys239 is modified to N6-acetyllysine; alternate. Lys239 participates in a covalent cross-link: Glycyl lysine isopeptide (Lys-Gly) (interchain with G-Cter in SUMO1); alternate. Tyr265 bears the Phosphotyrosine; by CSK mark. Residue Lys272 is modified to N6-acetyllysine; alternate. Lys272 is subject to N6-succinyllysine; alternate. At Lys275 the chain carries N6-acetyllysine. Residue Lys322 forms a Glycyl lysine isopeptide (Lys-Gly) (interchain with G-Cter in SUMO) linkage. Ser325 bears the Phosphoserine mark. Phosphotyrosine; by CSK is present on Tyr373. Thr435 bears the Phosphothreonine mark. 2 positions are modified to N6-acetyllysine: Lys439 and Lys445. Residue Ser502 is modified to Phosphoserine. Lys525 bears the N6,N6,N6-trimethyllysine; by EEF2KMT mark. Lys529 participates in a covalent cross-link: Glycyl lysine isopeptide (Lys-Gly) (interchain with G-Cter in SUMO). An N6-succinyllysine modification is found at Lys572. Ser595 carries the post-translational modification Phosphoserine; by CDK2. Position 619 is an N6-acetyllysine (Lys619). Residue His715 is modified to Diphthamide.

The protein belongs to the TRAFAC class translation factor GTPase superfamily. Classic translation factor GTPase family. EF-G/EF-2 subfamily. As to quaternary structure, binds to 80S ribosomes. Actively translating ribosomes show mutually exclusive binding of eIF5a (EIF5A or EIF5A2) and EEF2/eEF2. Interacts with SERBP1; interaction sequesters EEF2/eEF2 at the A-site of the ribosome, thereby blocking the interaction sites of the mRNA-tRNA complex, promoting ribosome stabilization and hibernation. Interacts with HABP4; interaction takes place at the A-site of hibernating ribosomes and promotes ribosome stabilization. Component of the mRNA surveillance SURF complex, at least composed of ERF1, ERF3 (ERF3A or ERF3B), EEF2, UPF1/RENT1, SMG1, SMG8 and SMG9. Interacts with RBPMS2. Post-translationally, phosphorylation by EF-2 kinase completely inactivates EF-2; it requires prior phosphorylation by CDK2 at Ser-595 during mitotic prometaphase. Phosphorylation by CSK promotes SUMOylation, proteolytic cleavage, and nuclear translocation if the C-terminal fragment. In terms of processing, diphthamide is 2-[3-carboxyamido-3-(trimethyl-ammonio)propyl]histidine. ISGylated. Post-translationally, proteolytically processed at two sites following phosphorylation by CSK. In terms of processing, SUMOylated following phosphorylation by CSK, promotes proteolytic cleavage.

It localises to the cytoplasm. The protein localises to the nucleus. It carries out the reaction GTP + H2O = GDP + phosphate + H(+). Functionally, catalyzes the GTP-dependent ribosomal translocation step during translation elongation. During this step, the ribosome changes from the pre-translocational (PRE) to the post-translocational (POST) state as the newly formed A-site-bound peptidyl-tRNA and P-site-bound deacylated tRNA move to the P and E sites, respectively. Catalyzes the coordinated movement of the two tRNA molecules, the mRNA and conformational changes in the ribosome. The chain is Elongation factor 2 (EEF2) from Callithrix jacchus (White-tufted-ear marmoset).